The following is a 274-amino-acid chain: Hematopoietically-expressed homeobox protein hhex (274 aa).

Positions 139 to 198 (RKGGQVRFSNDQTIELEKKFETQKYLSPPERKRLAKMLQLSERQVKTWFQNRRAKWRRLK) form a DNA-binding region, homeobox. The segment at 197–274 (LKQENPQGNK…GDKGFYNCAH (78 aa)) is disordered. Polar residues predominate over residues 237–248 (DEPTSSPTSQET). The span at 249-263 (LDSEVSDDSDQEVDI) shows a compositional bias: acidic residues.

In terms of tissue distribution, expressed in the most dorsoanterior endomesoderm of the blastula and gastrula embryo, and later is restricted to the forming liver diverticulum.

It is found in the nucleus. In terms of biological role, recognizes the DNA sequence 5'-ATTAA-3'. Transcriptional repressor. Regulates the differentiation of both endothelial and blood cells. Probably plays a role in the proliferation of vascular endothelial cells during blood vessel development. Establishes anterior identity at two levels; acts early to enhance canonical wnt-signaling by repressing expression of tle4, and acts later to inhibit nodal-signaling by directly targeting nodal/nr1 and nodal2/nr2. May play a role in liver development. Induces heart development. The polypeptide is Hematopoietically-expressed homeobox protein hhex (Xenopus tropicalis (Western clawed frog)).